The following is a 374-amino-acid chain: Putative G-protein coupled receptor-like protein B0244.6 (374 aa).

Residues Met-1 to Ser-54 lie on the Extracellular side of the membrane. Residues Val-55 to Leu-75 traverse the membrane as a helical segment. Topologically, residues Tyr-76–Lys-86 are cytoplasmic. The helical transmembrane segment at Tyr-87 to Ile-107 threads the bilayer. The Extracellular segment spans residues Gln-108 to Tyr-137. Residues Val-138–Ile-158 traverse the membrane as a helical segment. Residues Ala-159–Val-169 lie on the Cytoplasmic side of the membrane. The chain crosses the membrane as a helical span at residues Tyr-170–Phe-190. The Extracellular segment spans residues Gln-191–Asn-216. The chain crosses the membrane as a helical span at residues Phe-217–Ser-237. Residues Leu-238–Leu-262 lie on the Cytoplasmic side of the membrane. Residues Leu-263–Ile-283 traverse the membrane as a helical segment. The Extracellular portion of the chain corresponds to Ser-284 to Lys-304. The chain crosses the membrane as a helical span at residues Val-305–Ile-325. At Asp-326–Ile-374 the chain is on the cytoplasmic side.

Belongs to the G-protein coupled receptor 1 family. B0244 subfamily.

It is found in the cell membrane. This chain is Putative G-protein coupled receptor-like protein B0244.6, found in Caenorhabditis elegans.